Here is a 204-residue protein sequence, read N- to C-terminus: Protein GrpE (204 aa).

2 stretches are compositionally biased toward basic and acidic residues: residues 1 to 21 (MEEL…EVKG) and 36 to 46 (EEKIETEVEQK). The segment at 1–46 (MEELEKDKIERNEEMSEEVKGEGPPSELEQSEEVVEEKIETEVEQK) is disordered.

Belongs to the GrpE family. In terms of assembly, homodimer.

It is found in the cytoplasm. Participates actively in the response to hyperosmotic and heat shock by preventing the aggregation of stress-denatured proteins, in association with DnaK and GrpE. It is the nucleotide exchange factor for DnaK and may function as a thermosensor. Unfolded proteins bind initially to DnaJ; upon interaction with the DnaJ-bound protein, DnaK hydrolyzes its bound ATP, resulting in the formation of a stable complex. GrpE releases ADP from DnaK; ATP binding to DnaK triggers the release of the substrate protein, thus completing the reaction cycle. Several rounds of ATP-dependent interactions between DnaJ, DnaK and GrpE are required for fully efficient folding. This Caldanaerobacter subterraneus subsp. tengcongensis (strain DSM 15242 / JCM 11007 / NBRC 100824 / MB4) (Thermoanaerobacter tengcongensis) protein is Protein GrpE.